The following is a 198-amino-acid chain: Glycerol-3-phosphate acyltransferase (198 aa).

The next 5 helical transmembrane spans lie at 2 to 22, 48 to 70, 75 to 97, 111 to 131, and 154 to 174; these read YAVLTAIIAYLIGCINNAYIL, LGYKAAAPVFALDVLKGVIAVLI, MGNTGAMIAGIAVVCGHNWPVFL, VVMTVSPLLGLIALAIGVTVI, and IFWNSTQIFIFSLILASLAIF.

Belongs to the PlsY family. Probably interacts with PlsX.

The protein localises to the cell membrane. It catalyses the reaction an acyl phosphate + sn-glycerol 3-phosphate = a 1-acyl-sn-glycero-3-phosphate + phosphate. It functions in the pathway lipid metabolism; phospholipid metabolism. In terms of biological role, catalyzes the transfer of an acyl group from acyl-phosphate (acyl-PO(4)) to glycerol-3-phosphate (G3P) to form lysophosphatidic acid (LPA). This enzyme utilizes acyl-phosphate as fatty acyl donor, but not acyl-CoA or acyl-ACP. This is Glycerol-3-phosphate acyltransferase from Thermoanaerobacter pseudethanolicus (strain ATCC 33223 / 39E) (Clostridium thermohydrosulfuricum).